Here is a 166-residue protein sequence, read N- to C-terminus: Probable chemoreceptor glutamine deamidase CheD (166 aa).

This sequence belongs to the CheD family.

The enzyme catalyses L-glutaminyl-[protein] + H2O = L-glutamyl-[protein] + NH4(+). Its function is as follows. Probably deamidates glutamine residues to glutamate on methyl-accepting chemotaxis receptors (MCPs), playing an important role in chemotaxis. This chain is Probable chemoreceptor glutamine deamidase CheD, found in Clostridium acetobutylicum (strain ATCC 824 / DSM 792 / JCM 1419 / IAM 19013 / LMG 5710 / NBRC 13948 / NRRL B-527 / VKM B-1787 / 2291 / W).